The following is a 185-amino-acid chain: Large ribosomal subunit protein uL22 (185 aa).

The protein belongs to the universal ribosomal protein uL22 family.

This is Large ribosomal subunit protein uL22 (RPL17) from Debaryomyces hansenii (strain ATCC 36239 / CBS 767 / BCRC 21394 / JCM 1990 / NBRC 0083 / IGC 2968) (Yeast).